Here is a 101-residue protein sequence, read N- to C-terminus: NAD(P)H-quinone oxidoreductase subunit 4L (101 aa).

3 consecutive transmembrane segments (helical) span residues 3 to 23 (LQYFLLIAAALFCIGVYGLVT), 30 to 50 (VLMSIELMLNAVNLNLMAFSN), and 64 to 84 (IFVITIAAAEAAVGLAIVLAI).

It belongs to the complex I subunit 4L family. In terms of assembly, NDH-1 can be composed of about 15 different subunits; different subcomplexes with different compositions have been identified which probably have different functions.

It localises to the cellular thylakoid membrane. The enzyme catalyses a plastoquinone + NADH + (n+1) H(+)(in) = a plastoquinol + NAD(+) + n H(+)(out). It carries out the reaction a plastoquinone + NADPH + (n+1) H(+)(in) = a plastoquinol + NADP(+) + n H(+)(out). Its function is as follows. NDH-1 shuttles electrons from an unknown electron donor, via FMN and iron-sulfur (Fe-S) centers, to quinones in the respiratory and/or the photosynthetic chain. The immediate electron acceptor for the enzyme in this species is believed to be plastoquinone. Couples the redox reaction to proton translocation, and thus conserves the redox energy in a proton gradient. Cyanobacterial NDH-1 also plays a role in inorganic carbon-concentration. This is NAD(P)H-quinone oxidoreductase subunit 4L from Leptolyngbya boryana (Plectonema boryanum).